Reading from the N-terminus, the 148-residue chain is Deoxyuridine 5'-triphosphate nucleotidohydrolase (148 aa).

Residues 67–69, N80, 84–86, and M94 each bind substrate; these read RSG and LID.

The protein belongs to the dUTPase family. Mg(2+) serves as cofactor.

The enzyme catalyses dUTP + H2O = dUMP + diphosphate + H(+). The protein operates within pyrimidine metabolism; dUMP biosynthesis; dUMP from dCTP (dUTP route): step 2/2. In terms of biological role, this enzyme is involved in nucleotide metabolism: it produces dUMP, the immediate precursor of thymidine nucleotides and it decreases the intracellular concentration of dUTP so that uracil cannot be incorporated into DNA. The polypeptide is Deoxyuridine 5'-triphosphate nucleotidohydrolase (Ralstonia nicotianae (strain ATCC BAA-1114 / GMI1000) (Ralstonia solanacearum)).